The following is a 118-amino-acid chain: Small ribosomal subunit protein uS13 (118 aa).

The segment at 94 to 118 (SLPLRGQRTKTNARTRKGPRKPIKK) is disordered.

It belongs to the universal ribosomal protein uS13 family. Part of the 30S ribosomal subunit. Forms a loose heterodimer with protein S19. Forms two bridges to the 50S subunit in the 70S ribosome.

In terms of biological role, located at the top of the head of the 30S subunit, it contacts several helices of the 16S rRNA. In the 70S ribosome it contacts the 23S rRNA (bridge B1a) and protein L5 of the 50S subunit (bridge B1b), connecting the 2 subunits; these bridges are implicated in subunit movement. Contacts the tRNAs in the A and P-sites. The sequence is that of Small ribosomal subunit protein uS13 from Shewanella oneidensis (strain ATCC 700550 / JCM 31522 / CIP 106686 / LMG 19005 / NCIMB 14063 / MR-1).